Reading from the N-terminus, the 431-residue chain is Teosinte glume architecture 1 (431 aa).

Disordered regions lie at residues 18-55 (QDHA…GAPA) and 68-102 (ECEP…QQCP). Residues 21-41 (AAAAPSSGGHAANAAAAGTGT) show a composition bias toward low complexity. The SBP-type zinc-finger motif lies at 101–178 (CPSCAVDGCR…DGHNRRRRKP (78 aa)). Residues C104, C109, C126, H129, C145, C148, H152, and C164 each contribute to the Zn(2+) site. A compositionally biased stretch (gly residues) spans 408 to 419 (GGGSGGGEGSSD). The disordered stretch occupies residues 408-431 (GGGSGGGEGSSDGGTSSSMPFSWQ).

As to quaternary structure, monomer and homodimer. In terms of tissue distribution, strongly expressed in immature ears and weakly in husks. Found in the inflorescence meristem of the developing ear, in the spikelet pair primordia, the glume primordia, the cupule forming region and other floral organs. Not detected in other tissues.

Functionally, SBP transcriptional regulator probably involved in the domestication of maize. Acts as a transcriptional repressor binding to a 5'-GTAC-3' motif. May repress the growth of lateral branches in length and numbers. This Zea mays (Maize) protein is Teosinte glume architecture 1.